The following is a 75-amino-acid chain: Small ribosomal subunit protein bS18 (75 aa).

The protein belongs to the bacterial ribosomal protein bS18 family. Part of the 30S ribosomal subunit. Forms a tight heterodimer with protein bS6.

In terms of biological role, binds as a heterodimer with protein bS6 to the central domain of the 16S rRNA, where it helps stabilize the platform of the 30S subunit. In Psychrobacter sp. (strain PRwf-1), this protein is Small ribosomal subunit protein bS18.